The sequence spans 156 residues: uncharacterized protein (156 aa).

Residue histidine 55 is part of the active site.

It belongs to the thioester dehydratase family. FabZ subfamily.

This is an uncharacterized protein from Halalkalibacterium halodurans (strain ATCC BAA-125 / DSM 18197 / FERM 7344 / JCM 9153 / C-125) (Bacillus halodurans).